A 225-amino-acid chain; its full sequence is Orotate phosphoribosyltransferase (225 aa).

Position 29 (Lys-29) interacts with 5-phospho-alpha-D-ribose 1-diphosphate. Orotate is bound at residue 37–38 (FF). Residues 75–76 (YK), Arg-101, Lys-102, Lys-105, His-107, and 126–134 (DDVISAGTS) contribute to the 5-phospho-alpha-D-ribose 1-diphosphate site. Residues Ser-130 and Arg-158 each contribute to the orotate site.

It belongs to the purine/pyrimidine phosphoribosyltransferase family. PyrE subfamily. In terms of assembly, homodimer. Mg(2+) serves as cofactor.

It catalyses the reaction orotidine 5'-phosphate + diphosphate = orotate + 5-phospho-alpha-D-ribose 1-diphosphate. The protein operates within pyrimidine metabolism; UMP biosynthesis via de novo pathway; UMP from orotate: step 1/2. Its function is as follows. Catalyzes the transfer of a ribosyl phosphate group from 5-phosphoribose 1-diphosphate to orotate, leading to the formation of orotidine monophosphate (OMP). The chain is Orotate phosphoribosyltransferase from Ralstonia pickettii (strain 12J).